Reading from the N-terminus, the 40-residue chain is Potassium channel toxin alpha-KTx 12.2 (40 aa).

Intrachain disulfides connect C2/C5, C10/C31, C16/C36, and C20/C38.

Belongs to the short scorpion toxin superfamily. Potassium channel inhibitor family. Alpha-KTx 12 subfamily. As to expression, expressed by the venom gland.

It localises to the secreted. Inhibits high conductance calcium-activated potassium channels. Reversibly inhibits Shaker B potassium channels. In Tityus trivittatus (Argentinean scorpion), this protein is Potassium channel toxin alpha-KTx 12.2.